Reading from the N-terminus, the 423-residue chain is Gamma-glutamyl phosphate reductase (423 aa).

Belongs to the gamma-glutamyl phosphate reductase family.

Its subcellular location is the cytoplasm. It catalyses the reaction L-glutamate 5-semialdehyde + phosphate + NADP(+) = L-glutamyl 5-phosphate + NADPH + H(+). The protein operates within amino-acid biosynthesis; L-proline biosynthesis; L-glutamate 5-semialdehyde from L-glutamate: step 2/2. Functionally, catalyzes the NADPH-dependent reduction of L-glutamate 5-phosphate into L-glutamate 5-semialdehyde and phosphate. The product spontaneously undergoes cyclization to form 1-pyrroline-5-carboxylate. This is Gamma-glutamyl phosphate reductase from Burkholderia ambifaria (strain MC40-6).